Consider the following 306-residue polypeptide: Aspartate carbamoyltransferase catalytic subunit (306 aa).

Positions 56 and 57 each coordinate carbamoyl phosphate. L-aspartate is bound at residue K84. Carbamoyl phosphate is bound by residues R106, H134, and Q137. Positions 167 and 221 each coordinate L-aspartate. Residues G262 and P263 each coordinate carbamoyl phosphate.

Belongs to the aspartate/ornithine carbamoyltransferase superfamily. ATCase family. As to quaternary structure, heterododecamer (2C3:3R2) of six catalytic PyrB chains organized as two trimers (C3), and six regulatory PyrI chains organized as three dimers (R2).

The catalysed reaction is carbamoyl phosphate + L-aspartate = N-carbamoyl-L-aspartate + phosphate + H(+). Its pathway is pyrimidine metabolism; UMP biosynthesis via de novo pathway; (S)-dihydroorotate from bicarbonate: step 2/3. Catalyzes the condensation of carbamoyl phosphate and aspartate to form carbamoyl aspartate and inorganic phosphate, the committed step in the de novo pyrimidine nucleotide biosynthesis pathway. This chain is Aspartate carbamoyltransferase catalytic subunit, found in Desulforudis audaxviator (strain MP104C).